The following is a 482-amino-acid chain: CBL-interacting serine/threonine-protein kinase 23 (482 aa).

Residues 1 to 25 (MASRTTPSRSTPSRSTPSGSSSGGR) show a composition bias toward low complexity. The segment at 1 to 29 (MASRTTPSRSTPSRSTPSGSSSGGRTRVG) is disordered. In terms of domain architecture, Protein kinase spans 31–286 (YELGRTLGEG…FAEVIENEWF (256 aa)). ATP contacts are provided by residues 37–45 (LGEGTFAKV) and Lys-60. Catalysis depends on Asp-154, which acts as the Proton acceptor. The interval 172–201 (DFGLSALPQQVREDGLLHTTCGTPNYVAPE) is activation loop. Ser-176 is subject to Phosphoserine. At Thr-190 the chain carries Phosphothreonine. The 25-residue stretch at 328-352 (KTPVTMNAFELISTSQGLNLGSLFE) folds into the NAF domain. The segment at 359–388 (KRKTRFTSKSSANEIVTKIEAAAAPMGFDV) is PPI. Positions 459–482 (KEEGTDGGGTNGAMANRTIAKQST) are disordered.

This sequence belongs to the protein kinase superfamily. CAMK Ser/Thr protein kinase family. SNF1 subfamily. In terms of assembly, part of a K(+)-channel calcium-sensing kinase/phosphatase complex composed by a calcium sensor CBL (CBL1, CBL2, CBL3 or CBL9), a kinase CIPK (CIPK6, CIPK16 or CIPK23), a phosphatase PP2C (AIP1) and a K(+)-channel (AKT1). Interacts with AKT1, CBL1, CBL2, CBL3, CBL5, CBL8, CBL9 and NRT1.1. Mn(2+) is required as a cofactor. In terms of processing, autophosphorylated. In seedlings, mostly in vascular bundles, and in roots, especially in cortex and endodermis cells. In adult plants, mostly expressed in flowers, and, to a lower extent, in roots, leaves, stems and siliques, particularly in vascular tissues. Also detected in guard cells and root hairs.

Its subcellular location is the cell membrane. The enzyme catalyses L-seryl-[protein] + ATP = O-phospho-L-seryl-[protein] + ADP + H(+). It carries out the reaction L-threonyl-[protein] + ATP = O-phospho-L-threonyl-[protein] + ADP + H(+). In terms of biological role, CIPK serine-threonine protein kinases interact with CBL proteins. Binding of a CBL protein to the regulatory NAF domain of CIPK protein leads to activation of the kinase in a calcium-dependent manner. Downstream of CBL1, CBL2, CBL3 and CBL9, regulates by phosphorylation the K(+) conductance and uptake of AKT1 in low K(+) condition, in response to calcium signaling and during the stomatal opening regulation by monitoring the turgor pressure in guard cells. In response to low nitrate concentration, phosphorylates NRT1.1, switching it from a low-affinity nitrate transporter to a high-affinity transporter. Confers tolerance to low potassium conditions. Involved in drought sensitivity and leaf transpiration. In Arabidopsis thaliana (Mouse-ear cress), this protein is CBL-interacting serine/threonine-protein kinase 23 (CIPK23).